Reading from the N-terminus, the 480-residue chain is Ftsk domain-containing protein YdcQ (480 aa).

Helical transmembrane passes span Val25–Trp45 and Ser71–Phe91. The FtsK domain occupies Met217 to Gly399. Gly234–Thr241 provides a ligand contact to ATP.

The protein resides in the cell membrane. This chain is Ftsk domain-containing protein YdcQ (ydcQ), found in Bacillus subtilis (strain 168).